We begin with the raw amino-acid sequence, 101 residues long: Small ribosomal subunit protein uS14 (101 aa).

A disordered region spans residues 1 to 21 (MAKVSLIKKNESRKKKSQSLH). The span at 11–21 (ESRKKKSQSLH) shows a compositional bias: basic residues.

It belongs to the universal ribosomal protein uS14 family. As to quaternary structure, part of the 30S ribosomal subunit. Contacts proteins S3 and S10.

Its function is as follows. Binds 16S rRNA, required for the assembly of 30S particles and may also be responsible for determining the conformation of the 16S rRNA at the A site. In Rickettsia canadensis (strain McKiel), this protein is Small ribosomal subunit protein uS14.